The following is a 267-amino-acid chain: Hydroxynaphthalene reductase-like protein Arp2 (267 aa).

NADP(+)-binding residues include isoleucine 25, asparagine 45, aspartate 71, and asparagine 98. Residues serine 147 and serine 148 each act as proton donor in the active site. Tyrosine 162, lysine 166, valine 195, and threonine 197 together coordinate NADP(+). Tyrosine 162 acts as the Proton acceptor in catalysis. The Lowers pKa of active site Tyr role is filled by lysine 166.

The protein belongs to the short-chain dehydrogenases/reductases (SDR) family.

Functionally, hydroxynaphthalene reductase-like protein; part of the Pks2 gene cluster that mediates the formation of infectious structures (appressoria), enabling these fungi to kill insects faster. The product of the Pks2 gene cluster is different from the one of Pks1 and has still not been identified. The polypeptide is Hydroxynaphthalene reductase-like protein Arp2 (Metarhizium majus (strain ARSEF 297)).